Reading from the N-terminus, the 186-residue chain is Fanconi anemia core complex-associated protein 20 (186 aa).

Disordered regions lie at residues 1–30 and 50–90; these read MEEE…PWFL and TADW…GSKT. Basic residues predominate over residues 7–16; the sequence is LRGRLSRRRP. Serine 119 is modified (phosphoserine). Residues 150–186 form a UBZ2-type zinc finger; sequence LLSCPLCQKAFDPKLTQLDVDSHLAQCLAECTEDVVW. Zn(2+)-binding residues include cysteine 153, cysteine 156, histidine 172, and cysteine 176.

As to quaternary structure, component of the Fanconi anemia (FA) complex. Interacts with FANCA; interaction is direct. Interacts with REV1.

The protein resides in the nucleus. It localises to the chromosome. Functionally, component of the Fanconi anemia (FA) complex required to recruit the FA complex to DNA interstrand cross-links (ICLs) and promote ICLs repair. Following DNA damage recognizes and binds 'Lys-63'-linked ubiquitin generated by RNF8 at ICLs and recruits other components of the FA complex. Promotes translesion synthesis via interaction with REV1. This is Fanconi anemia core complex-associated protein 20 from Mus musculus (Mouse).